The following is a 177-amino-acid chain: MGISKASLLSLAAAGIVLAGCQSSRLGNLDNVSPPPPPAPVNAVPAGTVQKGNLDSPTQFPNAPSTDMSAQSGTQVASLPPASAPDLTPGAVAGVWNASLGGQSCKIATPQTKYGQGYRAGPLRCPGELANLASWAVNGKQLVLYDANGGTVASLYSSGQGRFDGQTTGGQAVTLSR.

A signal peptide spans 1 to 20 (MGISKASLLSLAAAGIVLAG). A lipid anchor (N-palmitoyl cysteine) is attached at Cys21. Cys21 carries the S-diacylglycerol cysteine lipid modification. Positions 28–79 (NLDNVSPPPPPAPVNAVPAGTVQKGNLDSPTQFPNAPSTDMSAQSGTQVASL) are disordered. The segment covering 50-77 (QKGNLDSPTQFPNAPSTDMSAQSGTQVA) has biased composition (polar residues).

This sequence belongs to the rhizobiaceae omp19 lipoprotein family.

Its subcellular location is the cell outer membrane. This is Outer membrane lipoprotein omp19 (omp19) from Brucella abortus (strain 2308).